A 401-amino-acid polypeptide reads, in one-letter code: Argininosuccinate synthase (401 aa).

ATP is bound at residue A9 to S17. Y86 contacts L-citrulline. G116 is a binding site for ATP. L-aspartate is bound by residues T118, N122, and D123. N122 contacts L-citrulline. L-citrulline-binding residues include R126, S174, S183, E259, and Y271.

This sequence belongs to the argininosuccinate synthase family. Type 1 subfamily. In terms of assembly, homotetramer.

It localises to the cytoplasm. The enzyme catalyses L-citrulline + L-aspartate + ATP = 2-(N(omega)-L-arginino)succinate + AMP + diphosphate + H(+). The protein operates within amino-acid biosynthesis; L-arginine biosynthesis; L-arginine from L-ornithine and carbamoyl phosphate: step 2/3. The polypeptide is Argininosuccinate synthase (Bacillus cytotoxicus (strain DSM 22905 / CIP 110041 / 391-98 / NVH 391-98)).